The following is a 293-amino-acid chain: NAD-dependent protein deacetylase (293 aa).

The Deacetylase sirtuin-type domain occupies 1 to 284 (MTVAITQTGP…QPPDPLHTAT (284 aa)). NAD(+) contacts are provided by residues 27–47 (GAGC…GGWK) and 105–108 (QNVD). The Proton acceptor role is filled by histidine 123. Residues cysteine 131, cysteine 134, cysteine 182, and cysteine 185 each contribute to the Zn(2+) site. NAD(+) is bound by residues 222–224 (GSS), 248–250 (NFG), and cysteine 266.

Belongs to the sirtuin family. Class II subfamily. It depends on Zn(2+) as a cofactor.

The protein resides in the cytoplasm. The catalysed reaction is N(6)-acetyl-L-lysyl-[protein] + NAD(+) + H2O = 2''-O-acetyl-ADP-D-ribose + nicotinamide + L-lysyl-[protein]. In terms of biological role, NAD-dependent protein deacetylase which modulates the activities of several enzymes which are inactive in their acetylated form. This Xanthomonas campestris pv. campestris (strain B100) protein is NAD-dependent protein deacetylase.